The chain runs to 203 residues: tRNA (cytidine(56)-2'-O)-methyltransferase (203 aa).

Residues Leu-80, 109 to 113 (GAEKV), and 127 to 134 (IGNQPHSE) contribute to the S-adenosyl-L-methionine site. The segment at 178-203 (AEQDKAEGKATPGKNWENSGFTGDNP) is disordered. Over residues 193–203 (WENSGFTGDNP) the composition is skewed to polar residues.

Belongs to the aTrm56 family. Homodimer.

Its subcellular location is the cytoplasm. The catalysed reaction is cytidine(56) in tRNA + S-adenosyl-L-methionine = 2'-O-methylcytidine(56) in tRNA + S-adenosyl-L-homocysteine + H(+). Its function is as follows. Specifically catalyzes the AdoMet-dependent 2'-O-ribose methylation of cytidine at position 56 in tRNAs. The protein is tRNA (cytidine(56)-2'-O)-methyltransferase of Pyrococcus horikoshii (strain ATCC 700860 / DSM 12428 / JCM 9974 / NBRC 100139 / OT-3).